The sequence spans 503 residues: Cytochrome P450 monooxygenase lnbC (503 aa).

A helical membrane pass occupies residues 14–34 (VVLLLSSVWIAVHLVLAAYNV). 2 N-linked (GlcNAc...) asparagine glycosylation sites follow: asparagine 94 and asparagine 169. Heme is bound at residue cysteine 446.

This sequence belongs to the cytochrome P450 family. It depends on heme as a cofactor.

The protein localises to the membrane. It participates in secondary metabolite biosynthesis. Cytochrome P450 monooxygenase; part of the lnb gene cluster that mediates the biosynthesis of diastereomeric piperazines. Lna and lnb clusters encode sets of enzymes that produce overlapping sets of previously undescribed metabolites such as piperazinomycin-like metabolites or morpholine. The lna and lnb biosynthetic pathways appear to be part of a signaling network that controls the formation of sclerotia, a resilient overwintering structure. One primary function of the non-canonical nonribosomal peptide synthetases lnaA and lnbA consists in the reduction of L-tyrosine. The presence in the clusters of tailoring enzymes such as the oxidoreductases lnaB, lnbB, lnaE or lnbE, as well as of the cytochrome P450 monooxygenases lnaC, lnaD, or lnbC, might explain formation of various diastereomeric piperazines. The chain is Cytochrome P450 monooxygenase lnbC from Aspergillus flavus (strain ATCC 200026 / FGSC A1120 / IAM 13836 / NRRL 3357 / JCM 12722 / SRRC 167).